Reading from the N-terminus, the 321-residue chain is Glucokinase (321 aa).

8 to 13 contributes to the ATP binding site; that stretch reads GDVGGT.

It belongs to the bacterial glucokinase family.

It localises to the cytoplasm. The catalysed reaction is D-glucose + ATP = D-glucose 6-phosphate + ADP + H(+). The chain is Glucokinase from Salmonella choleraesuis (strain SC-B67).